A 195-amino-acid polypeptide reads, in one-letter code: Protein SYM1 (195 aa).

The next 4 membrane-spanning stretches (helical) occupy residues 21 to 39 (GIMT…QVGF), 55 to 71 (AVVY…DSWY), 98 to 115 (LLFA…MSIL), and 159 to 175 (LFSV…FLSF).

Belongs to the peroxisomal membrane protein PXMP2/4 family.

It localises to the mitochondrion inner membrane. Functionally, may be involved in cellular response to stress. Required to maintain mitochondrial DNA (mtDNA) integrity and stability. This chain is Protein SYM1 (SYM1), found in Kluyveromyces lactis (strain ATCC 8585 / CBS 2359 / DSM 70799 / NBRC 1267 / NRRL Y-1140 / WM37) (Yeast).